The following is a 101-amino-acid chain: MAKKSKIAKNEQRKIVVARWAERRTELKETIRRPSSSEDERAEARAALQRLPRDASPVRLRNRDAADGRPRGHLRKFGLSRVRVREMAHRGELPGVHKSSW.

Basic and acidic residues-rich tracts occupy residues 28–44 and 61–70; these read KETI…RAEA and RNRDAADGRP. Residues 28–74 form a disordered region; it reads KETIRRPSSSEDERAEARAALQRLPRDASPVRLRNRDAADGRPRGHL.

It belongs to the universal ribosomal protein uS14 family. In terms of assembly, part of the 30S ribosomal subunit. Contacts proteins S3 and S10.

In terms of biological role, binds 16S rRNA, required for the assembly of 30S particles and may also be responsible for determining the conformation of the 16S rRNA at the A site. This chain is Small ribosomal subunit protein uS14A, found in Rhodococcus jostii (strain RHA1).